The sequence spans 99 residues: Large ribosomal subunit protein eL21 (99 aa).

It belongs to the eukaryotic ribosomal protein eL21 family.

This Ignicoccus hospitalis (strain KIN4/I / DSM 18386 / JCM 14125) protein is Large ribosomal subunit protein eL21.